The primary structure comprises 226 residues: Leucyl/phenylalanyl-tRNA--protein transferase (226 aa).

Belongs to the L/F-transferase family.

The protein resides in the cytoplasm. The enzyme catalyses N-terminal L-lysyl-[protein] + L-leucyl-tRNA(Leu) = N-terminal L-leucyl-L-lysyl-[protein] + tRNA(Leu) + H(+). It catalyses the reaction N-terminal L-arginyl-[protein] + L-leucyl-tRNA(Leu) = N-terminal L-leucyl-L-arginyl-[protein] + tRNA(Leu) + H(+). The catalysed reaction is L-phenylalanyl-tRNA(Phe) + an N-terminal L-alpha-aminoacyl-[protein] = an N-terminal L-phenylalanyl-L-alpha-aminoacyl-[protein] + tRNA(Phe). In terms of biological role, functions in the N-end rule pathway of protein degradation where it conjugates Leu, Phe and, less efficiently, Met from aminoacyl-tRNAs to the N-termini of proteins containing an N-terminal arginine or lysine. In Pseudomonas putida (strain W619), this protein is Leucyl/phenylalanyl-tRNA--protein transferase.